The sequence spans 93 residues: MQRGAVLLGVVAFLALWPQAGAEPYNLNDPDVRAMINDGRKLMDTCAKANHYIADRWSTYRIEYLEDKGLYHRMLRELVPCLNNFLRTRQEAP.

The N-terminal stretch at 1–22 is a signal peptide; that stretch reads MQRGAVLLGVVAFLALWPQAGA. The propeptide occupies 23–33; the sequence is EPYNLNDPDVR.

Belongs to the conotoxin F superfamily. Contains 4 disulfide bonds. In terms of tissue distribution, expressed by the venom duct.

It is found in the secreted. This is Conotoxin F_Vc1 from Conus victoriae (Queen Victoria cone).